The primary structure comprises 196 residues: Penicillin-binding protein activator LpoB (196 aa).

The first 16 residues, 1-16 (MKKYLGIVLMALVIAG), serve as a signal peptide directing secretion. Cys17 carries the N-palmitoyl cysteine lipid modification. A lipid anchor (S-diacylglycerol cysteine) is attached at Cys17. Residues 24-54 (TEQPATIEPAVPTPSKPQLPPSESQPLPTPP) are disordered. The span at 34–43 (VPTPSKPQLP) shows a compositional bias: pro residues.

This sequence belongs to the LpoB family. As to quaternary structure, interacts with PBP1b.

The protein resides in the cell outer membrane. Its function is as follows. Regulator of peptidoglycan synthesis that is essential for the function of penicillin-binding protein 1B (PBP1b). This Dickeya dadantii (strain 3937) (Erwinia chrysanthemi (strain 3937)) protein is Penicillin-binding protein activator LpoB.